The following is a 313-amino-acid chain: Porphobilinogen deaminase (313 aa).

At cysteine 241 the chain carries S-(dipyrrolylmethanemethyl)cysteine.

The protein belongs to the HMBS family. As to quaternary structure, monomer. Dipyrromethane serves as cofactor.

It carries out the reaction 4 porphobilinogen + H2O = hydroxymethylbilane + 4 NH4(+). Its pathway is porphyrin-containing compound metabolism; protoporphyrin-IX biosynthesis; coproporphyrinogen-III from 5-aminolevulinate: step 2/4. The protein operates within porphyrin-containing compound metabolism; chlorophyll biosynthesis. Tetrapolymerization of the monopyrrole PBG into the hydroxymethylbilane pre-uroporphyrinogen in several discrete steps. In Chlorobium phaeovibrioides (strain DSM 265 / 1930) (Prosthecochloris vibrioformis (strain DSM 265)), this protein is Porphobilinogen deaminase.